An 819-amino-acid chain; its full sequence is USP6 N-terminal-like protein (819 aa).

Met-1 carries the post-translational modification N-acetylmethionine. One can recognise a Rab-GAP TBC domain in the interval Gly-100–Gly-292. Residues Asp-355–Lys-367 show a composition bias toward basic and acidic residues. 2 disordered regions span residues Asp-355–Thr-498 and Leu-513–Thr-678. A phosphoserine mark is found at Ser-389, Ser-394, and Ser-398. Basic and acidic residues-rich tracts occupy residues Ser-399 to Pro-414 and Lys-432 to Arg-449. Residues His-464 to Asn-476 are compositionally biased toward low complexity. Basic and acidic residues-rich tracts occupy residues Val-477–Ser-489 and Lys-533–Arg-542. Residues Ser-544 and Ser-547 each carry the phosphoserine modification. Residues Glu-556–His-571 show a composition bias toward basic and acidic residues. Ser-574, Ser-631, Ser-644, Ser-648, Ser-665, Ser-669, and Ser-704 each carry phosphoserine. The segment covering Phe-642–Pro-655 has biased composition (polar residues). A Phosphotyrosine modification is found at Tyr-717. Over residues Ala-788–Ala-802 the composition is skewed to low complexity. A disordered region spans residues Ala-788 to Asn-807.

Interacts with EPS8.

The protein resides in the golgi apparatus. It is found in the cytoplasmic vesicle. Its function is as follows. Acts as a GTPase-activating protein for RAB5A and RAB43. Involved in receptor trafficking. In complex with EPS8 inhibits internalization of EGFR. Involved in retrograde transport from the endocytic pathway to the Golgi apparatus. Involved in the transport of Shiga toxin from early and recycling endosomes to the trans-Golgi network. Required for structural integrity of the Golgi complex. The chain is USP6 N-terminal-like protein (Usp6nl) from Mus musculus (Mouse).